A 202-amino-acid polypeptide reads, in one-letter code: Lymphotoxin-alpha (202 aa).

The N-terminal stretch at 1 to 33 is a signal peptide; the sequence is MTPLGRLHLLRVLSTPPVFLLGLLLALPLGAQG. The 143-residue stretch at 60-202 folds into the THD domain; the sequence is PAAHLVGYPS…STVFFGAFAL (143 aa). An N-linked (GlcNAc...) asparagine glycan is attached at Asn-93.

It belongs to the tumor necrosis factor family. Homotrimer, and heterotrimer of either two LTB and one LTA subunits or (less prevalent) two LTA and one LTB subunits. Interacts with TNFRSF14.

The protein resides in the secreted. The protein localises to the membrane. Cytokine that in its homotrimeric form binds to TNFRSF1A/TNFR1, TNFRSF1B/TNFBR and TNFRSF14/HVEM. In its heterotrimeric form with LTB binds to TNFRSF3/LTBR. Lymphotoxin is produced by lymphocytes and is cytotoxic for a wide range of tumor cells in vitro and in vivo. This chain is Lymphotoxin-alpha (Lta), found in Rattus norvegicus (Rat).